A 303-amino-acid polypeptide reads, in one-letter code: Major fimbrium anchoring subunit FimB (303 aa).

A signal peptide spans 1–22 (MNDAKKYIVSVLILLVAGMFGG). A lipid anchor (N-palmitoyl cysteine) is attached at Cys-23. Cys-23 is lipidated: S-diacylglycerol cysteine.

This sequence belongs to the bacteroidetes fimbrillin superfamily. FimB/Mfa2 family. FimB is not part of the fimbrium itself, but anchors the fimbrium in the outer membrane. Linear, head-to-tail oligomerization of fimbrial subunits mediates assembly of the fimbrium stalk, while the minor components FimC, FimD and FimE probably form the fimbrium tip. The anchoring subunit FimB limits fimbrium length and is important for solid fimbrium attachment to the outer membrane. In its absence, the major fimbriae become very long and are easily detached from the membrane.

The protein resides in the cell outer membrane. Its function is as follows. Anchoring subunit of the major fimbriae. Regulates fimbrial length. These filamentous pili are attached to the cell surface; they mediate biofilm formation, adhesion onto host cells and onto other bacteria that are part of the oral microbiome. Fimbriae of P.gingivalis are major virulence factors. This chain is Major fimbrium anchoring subunit FimB, found in Porphyromonas gingivalis (strain ATCC 33277 / DSM 20709 / CIP 103683 / JCM 12257 / NCTC 11834 / 2561).